A 478-amino-acid chain; its full sequence is MNKTLNPQEVWIKAVRNLEGFFSSPRVIGYLKKASPSIEGESLIITFPNSHLASVMDDIEVYDATKKTILDSYPSIKEIKITISPDVLEKEITEEINDLVQSMEEEDFALIDHTKPVIPNFFDQNTRVNFGGGPNNHHPTTGVNPRFTFDNFVVGKSNELARAASISAAERPGKSFNPLFIYGDSGVGKTHLLHSIGNYAKFLFPSLRIKYVSSEDFTNDFINSISSGTSQKFQEKYRQIDILMVDDIQFLQKKQETQESFFHTFNSLHNSSRQLVISSDLPPKQLMGFEDRMRSRFECGLVCDIQKPDLETRIAILQKKCQNEKKEVSMEILTYIASCFSSSVRELEGALLRIFALASFNKEEINMTLAQKVLEDLGAQRGDKIDPIEIIEITAKHYDLAASDLCGNSRVANISIARQIAMYLCRELTDVSLPKLGYIFGRDHSTIIYATRRISDLIGKDRKTFSDIYKLTQFILRR.

A domain I, interacts with DnaA modulators region spans residues 1–95; it reads MNKTLNPQEV…DVLEKEITEE (95 aa). Residues 96–141 are domain II; the sequence is INDLVQSMEEEDFALIDHTKPVIPNFFDQNTRVNFGGGPNNHHPTT. Residues 142–358 form a domain III, AAA+ region region; that stretch reads GVNPRFTFDN…GALLRIFALA (217 aa). Gly186, Gly188, Lys189, and Thr190 together coordinate ATP. Residues 359-478 are domain IV, binds dsDNA; the sequence is SFNKEEINMT…YKLTQFILRR (120 aa).

It belongs to the DnaA family. In terms of assembly, oligomerizes as a right-handed, spiral filament on DNA at oriC.

The protein localises to the cytoplasm. Plays an essential role in the initiation and regulation of chromosomal replication. ATP-DnaA binds to the origin of replication (oriC) to initiate formation of the DNA replication initiation complex once per cell cycle. Binds the DnaA box (a 9 base pair repeat at the origin) and separates the double-stranded (ds)DNA. Forms a right-handed helical filament on oriC DNA; dsDNA binds to the exterior of the filament while single-stranded (ss)DNA is stabiized in the filament's interior. The ATP-DnaA-oriC complex binds and stabilizes one strand of the AT-rich DNA unwinding element (DUE), permitting loading of DNA polymerase. After initiation quickly degrades to an ADP-DnaA complex that is not apt for DNA replication. Binds acidic phospholipids. This chain is Chromosomal replication initiator protein DnaA, found in Tropheryma whipplei (strain TW08/27) (Whipple's bacillus).